A 250-amino-acid chain; its full sequence is 3-deoxy-manno-octulosonate cytidylyltransferase (250 aa).

Belongs to the KdsB family.

It is found in the cytoplasm. It carries out the reaction 3-deoxy-alpha-D-manno-oct-2-ulosonate + CTP = CMP-3-deoxy-beta-D-manno-octulosonate + diphosphate. It participates in nucleotide-sugar biosynthesis; CMP-3-deoxy-D-manno-octulosonate biosynthesis; CMP-3-deoxy-D-manno-octulosonate from 3-deoxy-D-manno-octulosonate and CTP: step 1/1. It functions in the pathway bacterial outer membrane biogenesis; lipopolysaccharide biosynthesis. Activates KDO (a required 8-carbon sugar) for incorporation into bacterial lipopolysaccharide in Gram-negative bacteria. In Azorhizobium caulinodans (strain ATCC 43989 / DSM 5975 / JCM 20966 / LMG 6465 / NBRC 14845 / NCIMB 13405 / ORS 571), this protein is 3-deoxy-manno-octulosonate cytidylyltransferase.